A 111-amino-acid polypeptide reads, in one-letter code: Type III endosome membrane protein TEMP (111 aa).

Over 1–27 (MIGGNTTIISGAINASTEAPGLGTGGR) the chain is Extracellular. Residue Asn-5 is glycosylated (N-linked (GlcNAc...) asparagine). The chain crosses the membrane as a helical; Signal-anchor for type III membrane protein span at residues 28–48 (AWPVLVGVVLGAVVLSILIAL). Topologically, residues 49–111 (AAKCHLCRRY…TTGSRDHFSL (63 aa)) are cytoplasmic. The segment at 64-111 (HRPLSSAGGGNRPPVGEDEDDDGFIEDNYIQPGAGEMETTGSRDHFSL) is disordered. Positions 79–88 (GEDEDDDGFI) are enriched in acidic residues.

As to expression, expressed in stomach, kidney, large and small intestine and kidney.

It is found in the membrane. The protein localises to the early endosome. Its subcellular location is the recycling endosome. The protein resides in the cell membrane. Functionally, may be involved in membrane trafficking between endosomes and plasma membrane. This chain is Type III endosome membrane protein TEMP, found in Mus musculus (Mouse).